Here is a 124-residue protein sequence, read N- to C-terminus: Small ribosomal subunit protein uS12 (124 aa).

The disordered stretch occupies residues 1 to 32 (MPTIQQLVRKGRQAKASKTKTPALKGSPQRRG). Residues 9 to 18 (RKGRQAKASK) are compositionally biased toward basic residues. 3-methylthioaspartic acid is present on Asp89.

The protein belongs to the universal ribosomal protein uS12 family. Part of the 30S ribosomal subunit. Contacts proteins S8 and S17. May interact with IF1 in the 30S initiation complex.

In terms of biological role, with S4 and S5 plays an important role in translational accuracy. Its function is as follows. Interacts with and stabilizes bases of the 16S rRNA that are involved in tRNA selection in the A site and with the mRNA backbone. Located at the interface of the 30S and 50S subunits, it traverses the body of the 30S subunit contacting proteins on the other side and probably holding the rRNA structure together. The combined cluster of proteins S8, S12 and S17 appears to hold together the shoulder and platform of the 30S subunit. The protein is Small ribosomal subunit protein uS12 of Acidothermus cellulolyticus (strain ATCC 43068 / DSM 8971 / 11B).